Reading from the N-terminus, the 449-residue chain is Na(+)/H(+) antiporter NhaA (449 aa).

The next 12 helical transmembrane spans lie at 30–50, 69–89, 112–132, 138–158, 168–188, 192–212, 218–238, 241–261, 312–332, 348–368, 386–406, and 419–439; these read IFLI…WAGA, FGLT…FLVA, LLAA…LNLG, GWGI…GLLG, FLIA…ALFY, LSWI…LMNW, LIWY…SGIH, IAGV…SKIL, SLVD…NAGV, LGIL…FTLI, IIGI…ITNL, and ISIL…LLLT.

Belongs to the NhaA Na(+)/H(+) (TC 2.A.33) antiporter family.

Its subcellular location is the cell inner membrane. It carries out the reaction Na(+)(in) + 2 H(+)(out) = Na(+)(out) + 2 H(+)(in). In terms of biological role, na(+)/H(+) antiporter that extrudes sodium in exchange for external protons. In Christiangramia forsetii (strain DSM 17595 / CGMCC 1.15422 / KT0803) (Gramella forsetii), this protein is Na(+)/H(+) antiporter NhaA.